Consider the following 521-residue polypeptide: Vang-like protein 2 (521 aa).

The disordered stretch occupies residues 1–81; that stretch reads MDTESQYSGY…TTVVTGTSEH (81 aa). Residues 1–108 lie on the Cytoplasmic side of the membrane; the sequence is MDTESQYSGY…VPLDCSRHLG (108 aa). Basic residues predominate over residues 15 to 33; sequence GHSRSSRKHRDRRDRHRSK. Residues 57–67 are compositionally biased toward basic and acidic residues; that stretch reads ESTRGDERDDN. Residues 69-81 are compositionally biased toward low complexity; the sequence is GETTTVVTGTSEH. A helical membrane pass occupies residues 109 to 129; sequence VAAGAILALLSFLTPLAFLLL. Topologically, residues 130 to 147 are extracellular; the sequence is PPLLWREELEPCGTACEG. A helical membrane pass occupies residues 148–168; it reads LFISVAFKLLILLLGSWALFF. The Cytoplasmic portion of the chain corresponds to 169–178; that stretch reads RRPKASLPRV. The helical transmembrane segment at 179-199 threads the bilayer; that stretch reads FVLRALLMVLVFLLVISYWLF. The Extracellular portion of the chain corresponds to 200-217; that stretch reads YGVRILDARERSYQGVVQ. Residues 218-238 traverse the membrane as a helical segment; that stretch reads FAVSLVDALLFVHYLAVVLLE. Over 239–521 the chain is Cytoplasmic; it reads LRQLQPQFTL…VMRLQSETSV (283 aa).

This sequence belongs to the Vang family. In terms of assembly, homodimer and heterodimer with Vangl1. Interacts through its C-terminal region with the N-terminal half of DVL1, DVL2 and DVL3. The PDZ domain of DVL1, DVL2 and DVL3 is required for the interaction. Variants Glu-255 and Asn-464 impair interaction with the DVL proteins. Also interacts with the PDZ domains of MAGI3, SCRIB/SCRB1 and FZD3. Interacts with PRICKLE3. Primarily expressed in the brain and epididymis. Not detected in the cochlea of Lp mice.

Its subcellular location is the cell membrane. Involved in the control of early morphogenesis and patterning of both axial midline structures and the development of neural plate. Plays a role in the regulation of planar cell polarity, particularly in the orientation of stereociliary bundles in the cochlea. Required for polarization and movement of myocardializing cells in the outflow tract and seems to act via RHOA signaling to regulate this process. Required for cell surface localization of FZD3 and FZD6 in the inner ear. In Mus musculus (Mouse), this protein is Vang-like protein 2 (Vangl2).